The chain runs to 244 residues: Ribonuclease 3 (244 aa).

The 128-residue stretch at 7–134 (FEEVEKTLNI…IIAAIYIDSG (128 aa)) folds into the RNase III domain. Position 47 (glutamate 47) interacts with Mg(2+). Aspartate 51 is a catalytic residue. Residues asparagine 120 and glutamate 123 each contribute to the Mg(2+) site. Residue glutamate 123 is part of the active site. The DRBM domain occupies 161 to 230 (DYKTNLQEIV…AQDALKKLKS (70 aa)).

The protein belongs to the ribonuclease III family. In terms of assembly, homodimer. Mg(2+) serves as cofactor.

It is found in the cytoplasm. The catalysed reaction is Endonucleolytic cleavage to 5'-phosphomonoester.. Digests double-stranded RNA. Involved in the processing of primary rRNA transcript to yield the immediate precursors to the large and small rRNAs (23S and 16S). Processes some mRNAs, and tRNAs when they are encoded in the rRNA operon. Processes pre-crRNA and tracrRNA of type II CRISPR loci if present in the organism. This chain is Ribonuclease 3, found in Clostridium kluyveri (strain NBRC 12016).